Reading from the N-terminus, the 314-residue chain is MRIVVALGGNALLQRGMKGTFQDQQAACRLAMSQIVKIVKDGNELVMTHGNGPQCGAIFLQNVAGEQEKVPAMPLHVCGAETQGFLGELLQQELDGALRAEGIKKNVVSIVTQSFVDPKDPAFQNPTKPIGPFYSKEEAEFLRNERGYNMVEDAGRGYRMIVPSPVPQKFVEKEAIKTLVNSGFIVVCSGGGGIPVILDEQENRIEGVDAVIDKDLGASVLAAATNADAFMILTDVPEALLNYRKENETAIRQATVAEMEKYIEEGHFIKGSMLPKVQACLRFVKSTGKPALITALDCALQALKGERGTKIVPN.

This sequence belongs to the carbamate kinase family. In terms of assembly, homodimer.

It carries out the reaction hydrogencarbonate + NH4(+) + ATP = carbamoyl phosphate + ADP + H2O + H(+). It functions in the pathway metabolic intermediate metabolism; carbamoyl phosphate degradation; CO(2) and NH(3) from carbamoyl phosphate: step 1/1. This Trichomonas vaginalis protein is Carbamate kinase (CBK).